The following is a 433-amino-acid chain: Glutamate-rich protein 2 (433 aa).

Disordered stretches follow at residues 56–86 (VPAAGTAPAPPPPRALRPAPGPPRSAPLAPP), 113–161 (DSAS…KHPQ), 189–273 (SRQN…SIET), 308–344 (CLEDIEENLSDSTDGDGEEDSNNEDDEGPAKKETRAP), and 394–433 (EKAQEEEEEEESDEDSSSESEVDSSEDGSEDSSDECEDGS). The segment covering 63–85 (PAPPPPRALRPAPGPPRSAPLAP) has biased composition (pro residues). Polar residues predominate over residues 114–127 (SASQARGSEPSSSA). 2 stretches are compositionally biased toward basic and acidic residues: residues 199-214 (DPKEKLMSGSNKEKPQ) and 244-258 (ARKETSSKKIEDKVS). The segment covering 259-273 (LKSSENRPSSRSIET) has biased composition (polar residues). 2 stretches are compositionally biased toward acidic residues: residues 308 to 334 (CLEDIEENLSDSTDGDGEEDSNNEDDE) and 397 to 433 (QEEEEEEESDEDSSSESEVDSSEDGSEDSSDECEDGS).

In Rattus norvegicus (Rat), this protein is Glutamate-rich protein 2 (Erich2).